A 907-amino-acid polypeptide reads, in one-letter code: Androgen receptor (907 aa).

Positions 1–545 are modulating; the sequence is MEVQLGLGRV…PIDYYFPPQK (545 aa). The interval 1 to 574 is interaction with ZNF318; the sequence is MEVQLGLGRV…GSCKVFFKRA (574 aa). 2 disordered regions span residues 36 to 152 and 200 to 231; these read NPGP…LSLL and QQQE…YLGG. Residues 55 to 76 are compositionally biased toward low complexity; the sequence is QQQQQQQQQQETSPRQQQQQQQ. Ser67 bears the Phosphoserine; by CDK9 mark. The residue at position 81 (Ser81) is a Phosphoserine. Residues 123–134 are compositionally biased toward polar residues; sequence TSATGKGLQQQQ. Over residues 200–224 the composition is skewed to low complexity; sequence QQQEVVSEGSSSGRAREAAGASTSS. Phosphotyrosine; by CSK is present on Tyr228. At Ser261 the chain carries Phosphoserine. At Tyr272 the chain carries Phosphotyrosine; by CSK and TNK2. Tyr310, Tyr349, Tyr360, and Tyr365 each carry phosphotyrosine; by CSK. The residue at position 366 (Tyr366) is a Phosphotyrosine; by CSK and TNK2. A Glycyl lysine isopeptide (Lys-Gly) (interchain with G-Cter in SUMO) cross-link involves residue Lys389. Tyr396 is modified (phosphotyrosine; by CSK). Lys508 participates in a covalent cross-link: Glycyl lysine isopeptide (Lys-Gly) (interchain with G-Cter in SUMO). Phosphotyrosine; by CSK occurs at positions 522 and 539. An interaction with LPXN region spans residues 539–906; it reads YYFPPQKTCL…GKVKPIYFHT (368 aa). Residues 546–619 constitute a DNA-binding region (nuclear receptor); sequence TCLICGDEAS…AGMTLGARKL (74 aa). 2 NR C4-type zinc fingers span residues 547-567 and 583-607; these read CLIC…CGSC and CASR…LRKC. The tract at residues 559 to 649 is interaction with HIPK3; that stretch reads YGALTCGSCK…TEEPTQKLTV (91 aa). An interaction with CCAR1 region spans residues 579–906; that stretch reads QKYLCASRND…GKVKPIYFHT (328 aa). Positions 612 to 906 are interaction with KAT7; it reads MTLGARKLKK…GKVKPIYFHT (295 aa). Ser638 bears the Phosphoserine; by STK4/MST1 mark. The region spanning 656–887 is the NR LBD domain; it reads ECQPIFLNVL…DFPEMMAEII (232 aa). Asn693 and Arg740 together coordinate 17beta-hydroxy-5alpha-androstan-3-one. Residues Lys833 and Lys835 each participate in a glycyl lysine isopeptide (Lys-Gly) (interchain with G-Cter in ubiquitin) cross-link. Thr865 is a binding site for 17beta-hydroxy-5alpha-androstan-3-one. Residue Tyr903 is modified to Phosphotyrosine; by CSK.

It belongs to the nuclear hormone receptor family. NR3 subfamily. As to quaternary structure, binds DNA as a homodimer. Part of a ternary complex containing AR, EFCAB6/DJBP and PARK7. Interacts with HIPK3 and NR0B2 in the presence of androgen. The ligand binding domain interacts with KAT7/HBO1 in the presence of dihydrotestosterone. Interacts with EFCAB6/DJBP, PQBP1, RANBP9, RBAK, SPDEF, SRA1, TGFB1I1 and RREB1. Interacts with ZMIZ1/ZIMP10 and ZMIZ2/ZMIP7 which both enhance its transactivation activity. Interacts with SLC30A9 and RAD54L2/ARIP4. Interacts with MACROD1 (via macro domain). Interacts via the ligand-binding domain with LXXLL and FXXLF motifs from NCOA1, NCOA2, NCOA3 and MAGEA11. Interacts (via nuclear receptor DNA binding domain and nuclear receptor ligand binding domain) with NCOA4. The AR N-terminal poly-Gln region binds Ran resulting in enhancement of AR-mediated transactivation. Ran-binding decreases as the poly-Gln length increases. Interacts with HIP1 (via coiled coil domain). Interacts (via ligand-binding domain) with TRIM68. Interacts with TNK2. Interacts with USP26. Interacts with RNF6. Interacts (regulated by RNF6 probably through polyubiquitination) with RNF14; regulates AR transcriptional activity. Interacts with PRMT2 and TRIM24. Interacts with RACK1. Interacts with RANBP10; this interaction enhances dihydrotestosterone-induced AR transcriptional activity. Interacts with PRPF6 in a hormone-independent way; this interaction enhances dihydrotestosterone-induced AR transcriptional activity. Interacts with STK4/MST1. Interacts with ZIPK/DAPK3. Interacts with LPXN. Interacts with MAK. Part of a complex containing AR, MAK and NCOA3. Interacts with CRY1. Interacts with CCAR1 and GATA2. Interacts with ZNF318. Interacts with BUD31. Interacts with ARID4A. Interacts with ARID4B. Interacts (via NR LBD domain) with ZBTB7A; the interaction is direct and androgen-dependent. Interacts with NCOR1. Interacts with NCOR2. Interacts witH CRY2 in a ligand-dependent manner. In terms of processing, phosphorylated in prostate cancer cells in response to several growth factors including EGF. Phosphorylation is induced by c-Src kinase (CSK). Tyr-522 is one of the major phosphorylation sites and an increase in phosphorylation and Src kinase activity is associated with prostate cancer progression. Phosphorylation by TNK2 enhances the DNA-binding and transcriptional activity. Phosphorylation at Ser-67 by CDK9 regulates AR promoter selectivity and cell growth. Post-translationally, sumoylated on Lys-389 (major) and Lys-508. Ubiquitinated. Deubiquitinated by USP26. 'Lys-6' and 'Lys-27'-linked polyubiquitination by RNF6 modulates AR transcriptional activity and specificity. Palmitoylated by ZDHHC7 and ZDHHC21. Palmitoylation is required for plasma membrane targeting and for rapid intracellular signaling via ERK and AKT kinases and cAMP generation.

It localises to the nucleus. Its subcellular location is the cytoplasm. In terms of biological role, steroid hormone receptors are ligand-activated transcription factors that regulate eukaryotic gene expression and affect cellular proliferation and differentiation in target tissues. Transcription factor activity is modulated by bound coactivator and corepressor proteins like ZBTB7A that recruits NCOR1 and NCOR2 to the androgen response elements/ARE on target genes, negatively regulating androgen receptor signaling and androgen-induced cell proliferation. Transcription activation is also down-regulated by NR0B2. Activated, but not phosphorylated, by HIPK3 and ZIPK/DAPK3. In Canis lupus familiaris (Dog), this protein is Androgen receptor (AR).